Reading from the N-terminus, the 1216-residue chain is ATP-dependent helicase/nuclease subunit A (1216 aa).

Positions 26–488 (QKKTAEQIEA…ILLKENFRSS (463 aa)) constitute a UvrD-like helicase ATP-binding domain. 47–54 (ASAGSGKT) is an ATP binding site. In terms of domain architecture, UvrD-like helicase C-terminal spans 515-802 (KHQLVFANTK…ELMTIHKSKG (288 aa)).

The protein belongs to the helicase family. AddA subfamily. In terms of assembly, heterodimer of AddA and AddB/RexB. Requires Mg(2+) as cofactor.

It catalyses the reaction Couples ATP hydrolysis with the unwinding of duplex DNA by translocating in the 3'-5' direction.. The catalysed reaction is ATP + H2O = ADP + phosphate + H(+). In terms of biological role, the heterodimer acts as both an ATP-dependent DNA helicase and an ATP-dependent, dual-direction single-stranded exonuclease. Recognizes the chi site generating a DNA molecule suitable for the initiation of homologous recombination. The AddA nuclease domain is required for chi fragment generation; this subunit has the helicase and 3' -&gt; 5' nuclease activities. The chain is ATP-dependent helicase/nuclease subunit A from Streptococcus pneumoniae (strain Hungary19A-6).